The primary structure comprises 184 residues: Large ribosomal subunit protein uL6 (184 aa).

It belongs to the universal ribosomal protein uL6 family. In terms of assembly, part of the 50S ribosomal subunit.

Its function is as follows. This protein binds to the 23S rRNA, and is important in its secondary structure. It is located near the subunit interface in the base of the L7/L12 stalk, and near the tRNA binding site of the peptidyltransferase center. The polypeptide is Large ribosomal subunit protein uL6 (Thermotoga petrophila (strain ATCC BAA-488 / DSM 13995 / JCM 10881 / RKU-1)).